A 295-amino-acid chain; its full sequence is 3-hydroxy-5-phosphonooxypentane-2,4-dione thiolase (295 aa).

K203 acts as the Schiff-base intermediate with substrate in catalysis.

Belongs to the DeoC/FbaB aldolase family. As to quaternary structure, homodecamer.

It localises to the cytoplasm. It catalyses the reaction dihydroxyacetone phosphate + acetyl-CoA = 3-hydroxy-2,4-dioxopentyl phosphate + CoA. Functionally, involved in the degradation of phospho-AI-2, thereby terminating induction of the lsr operon and closing the AI-2 signaling cycle. Catalyzes the transfer of an acetyl moiety from 3-hydroxy-5-phosphonooxypentane-2,4-dione to CoA to form glycerone phosphate and acetyl-CoA. In Klebsiella pneumoniae subsp. pneumoniae (strain ATCC 700721 / MGH 78578), this protein is 3-hydroxy-5-phosphonooxypentane-2,4-dione thiolase.